Here is a 340-residue protein sequence, read N- to C-terminus: Ketol-acid reductoisomerase (NADP(+)) (340 aa).

Positions 3-182 (VQMEYEKDVK…GAARVGLLET (180 aa)) constitute a KARI N-terminal Rossmann domain. NADP(+)-binding positions include 26–29 (YGSQ), arginine 49, serine 53, and 83–86 (DEIQ). The active site involves histidine 108. Residue glycine 134 participates in NADP(+) binding. The 146-residue stretch at 183–328 (TYKEETEEDL…AELRKAMPFV (146 aa)) folds into the KARI C-terminal knotted domain. Residues aspartate 191, glutamate 195, glutamate 227, and glutamate 231 each contribute to the Mg(2+) site. Serine 252 provides a ligand contact to substrate.

Belongs to the ketol-acid reductoisomerase family. Mg(2+) is required as a cofactor.

The enzyme catalyses (2R)-2,3-dihydroxy-3-methylbutanoate + NADP(+) = (2S)-2-acetolactate + NADPH + H(+). It catalyses the reaction (2R,3R)-2,3-dihydroxy-3-methylpentanoate + NADP(+) = (S)-2-ethyl-2-hydroxy-3-oxobutanoate + NADPH + H(+). It functions in the pathway amino-acid biosynthesis; L-isoleucine biosynthesis; L-isoleucine from 2-oxobutanoate: step 2/4. Its pathway is amino-acid biosynthesis; L-valine biosynthesis; L-valine from pyruvate: step 2/4. In terms of biological role, involved in the biosynthesis of branched-chain amino acids (BCAA). Catalyzes an alkyl-migration followed by a ketol-acid reduction of (S)-2-acetolactate (S2AL) to yield (R)-2,3-dihydroxy-isovalerate. In the isomerase reaction, S2AL is rearranged via a Mg-dependent methyl migration to produce 3-hydroxy-3-methyl-2-ketobutyrate (HMKB). In the reductase reaction, this 2-ketoacid undergoes a metal-dependent reduction by NADPH to yield (R)-2,3-dihydroxy-isovalerate. This Streptococcus pneumoniae (strain Hungary19A-6) protein is Ketol-acid reductoisomerase (NADP(+)).